The primary structure comprises 101 residues: MGRGVSSGGGQSSLGYLFGGGEAPKSAEKPAPVQKPAPSSSAEKLKEIPAGIQSSKANNYMRAEGQNCGNFLTDRPSTKVQAAPGGGSSLDYLFSGNKDGK.

Residues 1-22 (MGRGVSSGGGQSSLGYLFGGGE) show a composition bias toward gly residues. 2 disordered regions span residues 1–54 (MGRG…GIQS) and 73–101 (TDRPSTKVQAAPGGGSSLDYLFSGNKDGK).

The protein belongs to the SPIRAL1 family.

In terms of biological role, acts in maintaining the cortical microtubules organization essential for anisotropic cell growth. The sequence is that of Protein SPIRAL1-like 3 from Oryza sativa subsp. japonica (Rice).